The chain runs to 414 residues: Alanine--glyoxylate aminotransferase (414 aa).

Residues M1–M23 constitute a mitochondrion transit peptide. Position 231 is an N6-(pyridoxal phosphate)lysine (K231). An N6-acetyllysine mark is found at K256 and K334. Substrate is bound at residue R382.

Belongs to the class-V pyridoxal-phosphate-dependent aminotransferase family. As to quaternary structure, homodimer. It depends on pyridoxal 5'-phosphate as a cofactor.

The protein localises to the peroxisome. Its subcellular location is the mitochondrion matrix. The enzyme catalyses L-serine + pyruvate = 3-hydroxypyruvate + L-alanine. It catalyses the reaction glyoxylate + L-alanine = glycine + pyruvate. Functionally, catalyzes the transamination of glyoxylate to glycine and contributes to the glyoxylate detoxification. Catalyzes the transamination between L-serine and pyruvate and weakly contributes to gluconeogenesis from the L-serine metabolism. This is Alanine--glyoxylate aminotransferase from Callithrix jacchus (White-tufted-ear marmoset).